The chain runs to 303 residues: Pyridoxal 5'-phosphate synthase subunit PdxS (303 aa).

Aspartate 33 contributes to the D-ribose 5-phosphate binding site. Catalysis depends on lysine 90, which acts as the Schiff-base intermediate with D-ribose 5-phosphate. Residue glycine 162 coordinates D-ribose 5-phosphate. D-glyceraldehyde 3-phosphate is bound at residue arginine 174. Residues glycine 223 and 244–245 each bind D-ribose 5-phosphate; that span reads GS.

This sequence belongs to the PdxS/SNZ family. As to quaternary structure, in the presence of PdxT, forms a dodecamer of heterodimers.

The catalysed reaction is aldehydo-D-ribose 5-phosphate + D-glyceraldehyde 3-phosphate + L-glutamine = pyridoxal 5'-phosphate + L-glutamate + phosphate + 3 H2O + H(+). It participates in cofactor biosynthesis; pyridoxal 5'-phosphate biosynthesis. In terms of biological role, catalyzes the formation of pyridoxal 5'-phosphate from ribose 5-phosphate (RBP), glyceraldehyde 3-phosphate (G3P) and ammonia. The ammonia is provided by the PdxT subunit. Can also use ribulose 5-phosphate and dihydroxyacetone phosphate as substrates, resulting from enzyme-catalyzed isomerization of RBP and G3P, respectively. The chain is Pyridoxal 5'-phosphate synthase subunit PdxS from Streptomyces coelicolor (strain ATCC BAA-471 / A3(2) / M145).